A 499-amino-acid polypeptide reads, in one-letter code: ADP,ATP carrier protein 5 (499 aa).

11 helical membrane-spanning segments follow: residues 25-45 (LGKF…QNVL), 61-81 (IAGF…VIIY), 93-113 (IFYY…FVIY), 148-168 (YIVY…LLFW), 183-203 (FYTL…FLMM), 223-243 (ITLV…CCLL), 286-306 (LWLL…VEAV), 327-347 (LYIL…NNIM), 356-376 (AVIS…LIVF), 380-400 (ILSL…VSIG), and 468-488 (LISP…IYAV).

This sequence belongs to the ADP/ATP translocase tlc family.

Its subcellular location is the cell membrane. In terms of biological role, provides the rickettsial cell with host ATP in exchange for rickettsial ADP. This is an obligate exchange system. This energy acquiring activity is an important component of rickettsial parasitism. This is ADP,ATP carrier protein 5 (tlcE) from Rickettsia conorii (strain ATCC VR-613 / Malish 7).